The chain runs to 409 residues: Serine/threonine transporter SstT (409 aa).

9 consecutive transmembrane segments (helical) span residues 17–37, 49–69, 83–103, 142–162, 180–200, 218–238, 299–319, 331–351, and 357–377; these read LVVQIIVGLVAGLLLASFFPA, FVSALKAVAPVLVFVLVMASI, ILLLYLVGTFSAAVVAVIASF, ALISANFIGILAWAIGLGIAF, VSLIVKVVIRFAPLGIFGLVA, LVVLLGCMLFVAFVVNPLIVF, MAGAAITITVLTLAAVHTLGI, VVASVCACGASGVAGGSLLLI, and LFGIPSEVAMQVVAVGFIIAI.

It belongs to the dicarboxylate/amino acid:cation symporter (DAACS) (TC 2.A.23) family.

Its subcellular location is the cell inner membrane. The catalysed reaction is L-serine(in) + Na(+)(in) = L-serine(out) + Na(+)(out). It catalyses the reaction L-threonine(in) + Na(+)(in) = L-threonine(out) + Na(+)(out). Functionally, involved in the import of serine and threonine into the cell, with the concomitant import of sodium (symport system). The chain is Serine/threonine transporter SstT from Pseudomonas paraeruginosa (strain DSM 24068 / PA7) (Pseudomonas aeruginosa (strain PA7)).